A 702-amino-acid polypeptide reads, in one-letter code: Soluble guanylate cyclase gcy-31 (702 aa).

His104 is a binding site for heme. Residues 368–406 (TQQSAELKLLLHQEAQKSRNMRENMNRLKKERRRTDKLL) adopt a coiled-coil conformation. The Guanylate cyclase domain maps to 435–564 (TILFTDIVEF…ETVYVANKME (130 aa)). Positions 440 and 484 each coordinate Mg(2+). The segment at 614–702 (RHGPHRVPSP…QDLTPRKSIT (89 aa)) is disordered. Residues 633-643 (SQTEDDDDDEL) show a composition bias toward acidic residues. Residues 683–695 (RNSNKTPRQSQDL) show a composition bias toward polar residues.

It belongs to the adenylyl cyclase class-4/guanylyl cyclase family. Heterodimer; with other soluble guanylate cyclases. It depends on heme as a cofactor. Expressed in a pair of bilaterally symmetric neurons in the head.

The protein localises to the cytoplasm. The enzyme catalyses GTP = 3',5'-cyclic GMP + diphosphate. With respect to regulation, may be regulated by molecular oxygen. Probably not activated by nitric oxide (NO). Functionally, synthesizes cyclic GMP (cGMP) from GTP. May play a role in embryogenesis. The sequence is that of Soluble guanylate cyclase gcy-31 (gcy-31) from Caenorhabditis elegans.